We begin with the raw amino-acid sequence, 366 residues long: tRNA/tmRNA (uracil-C(5))-methyltransferase (366 aa).

Positions 190, 218, 223, 239, and 299 each coordinate S-adenosyl-L-methionine. The Nucleophile role is filled by Cys324. Glu358 (proton acceptor) is an active-site residue.

Belongs to the class I-like SAM-binding methyltransferase superfamily. RNA M5U methyltransferase family. TrmA subfamily.

The catalysed reaction is uridine(54) in tRNA + S-adenosyl-L-methionine = 5-methyluridine(54) in tRNA + S-adenosyl-L-homocysteine + H(+). It carries out the reaction uridine(341) in tmRNA + S-adenosyl-L-methionine = 5-methyluridine(341) in tmRNA + S-adenosyl-L-homocysteine + H(+). Its function is as follows. Dual-specificity methyltransferase that catalyzes the formation of 5-methyluridine at position 54 (m5U54) in all tRNAs, and that of position 341 (m5U341) in tmRNA (transfer-mRNA). The polypeptide is tRNA/tmRNA (uracil-C(5))-methyltransferase (Salmonella paratyphi B (strain ATCC BAA-1250 / SPB7)).